The sequence spans 416 residues: Squamosa promoter-binding-like protein 8 (416 aa).

A disordered region spans residues 11-51 (SSCDDFGYNATPPPPPSLLPIMDQDGGGGSIQRDHHQHHNH). Residues 182–260 (PPRCQAEGCK…ADHNRRRRKS (79 aa)) form an SBP-type zinc finger. 8 residues coordinate Zn(2+): Cys-185, Cys-190, Cys-207, His-210, Cys-227, Cys-230, His-234, and Cys-246. Residues 243 to 259 (KKSCRKRLADHNRRRRK) carry the Bipartite nuclear localization signal motif. A disordered region spans residues 250 to 299 (LADHNRRRRKSKPSDGEHSGEKRRAQANKSAATKDKAGSSSKNAGIGDGF). Positions 261–273 (KPSDGEHSGEKRR) are enriched in basic and acidic residues.

In terms of tissue distribution, expressed in stems, leaf sheaths, and young panicles. Weakly expressed in ligules, auricles, and leaf sheaths at the basal region.

It localises to the nucleus. Functionally, probable transcription factor that plays an important role in building the laminar joint between leaf blade and leaf sheath boundary, thereby controlling ligule and auricle development. This is Squamosa promoter-binding-like protein 8 (SPL8) from Oryza sativa subsp. japonica (Rice).